The sequence spans 856 residues: Glucans biosynthesis glucosyltransferase H (856 aa).

6 consecutive transmembrane segments (helical) span residues 144–164, 198–218, 517–537, 574–594, 608–628, and 684–704; these read ILLVLMLGQTIVAGWYMKGIM, ILILFGILFCWVSAGFWTALM, VFLTGVMSYLSAPLWFFFLVL, LFSTTIVLLFLPKLLSIILIW, TLSMLLEMLFSMLLAPVRMIF, and FLWWLVPIVGSLMLSIPVSVI.

This sequence belongs to the glycosyltransferase 2 family. OpgH subfamily.

The protein resides in the cell inner membrane. It participates in glycan metabolism; osmoregulated periplasmic glucan (OPG) biosynthesis. Involved in the biosynthesis of osmoregulated periplasmic glucans (OPGs). The protein is Glucans biosynthesis glucosyltransferase H of Pseudomonas fluorescens (strain ATCC BAA-477 / NRRL B-23932 / Pf-5).